Consider the following 519-residue polypeptide: S-type anion channel SLAH2 (519 aa).

Residues 1-31 (MNNPRSVSPLVSPANHSDLLENQRQSGSGDF) are disordered. At 1–140 (MNNPRSVSPL…LPEDKTWPFL (140 aa)) the chain is on the cytoplasmic side. The span at 20–29 (LENQRQSGSG) shows a compositional bias: polar residues. Phosphoserine is present on residues Ser-77 and Ser-85. The chain crosses the membrane as a helical span at residues 141 to 161 (LRFPITSYGMCLGVSSQAIMW). At 162–185 (KTLATTEAEKFLHVTQVINHVLWW) the chain is on the extracellular side. The chain crosses the membrane as a helical span at residues 186-206 (ISLLLLLAVSITYLFKTILFF). The Cytoplasmic segment spans residues 207-220 (EAVRREFRHPIRVN). A helical membrane pass occupies residues 221–241 (FFFAPLISILFLALGIPHSII). Over 242-247 (SHLPST) the chain is Extracellular. The chain crosses the membrane as a helical span at residues 248–268 (LWYFLMAPILFLEMKIYGQWM). The Cytoplasmic portion of the chain corresponds to 269-281 (SGGQRRLSKVANP). The chain crosses the membrane as a helical span at residues 282-302 (TNHLSIVGNFAGALLGASMGL). Topologically, residues 303–304 (KE) are extracellular. A helical transmembrane segment spans residues 305 to 325 (GPIFFFAIGLAYYLVLFVTLY). At 326 to 340 (QRLPTNETLPKELHP) the chain is on the cytoplasmic side. Residues 341–361 (VFFLFVAAPAVASMAWTKISA) form a helical membrane-spanning segment. A topological domain (extracellular) is located at residue Ser-362. Residues 363–383 (FDLGSRLAYFISLFLYFSLVC) traverse the membrane as a helical segment. Topologically, residues 384-389 (RINLFR) are cytoplasmic. The helical transmembrane segment at 390–410 (GFKFSLAWWAYTFPMTAVASA) threads the bilayer. At 411-424 (TIKYSDEVTGVATK) the chain is on the extracellular side. A helical membrane pass occupies residues 425–445 (ILSVVMSGAATLTVIAVLGLT). Residues 446–519 (VMHAFVQRDL…VDSSTVQNSN (74 aa)) lie on the Cytoplasmic side of the membrane. Residues 495–519 (PEDNQIDLESPPLVNVDSSTVQNSN) form a disordered region. Over residues 510–519 (VDSSTVQNSN) the composition is skewed to polar residues.

It belongs to the SLAC1 S-type anion channel family. Homotrimer. As to expression, expressed in lateral root primordia and tap root tips.

It localises to the cell membrane. Functionally, slow, weak voltage-dependent S-type anion efflux channel involved in maintenance of anion homeostasis. The protein is S-type anion channel SLAH2 (SLAH2) of Arabidopsis thaliana (Mouse-ear cress).